Here is a 496-residue protein sequence, read N- to C-terminus: Catalase isozyme 3 (496 aa).

The tract at residues 1-25 (MTMDPTKFRPSSSHDTTVTTTNAGA) is disordered. A compositionally biased stretch (polar residues) spans 9-23 (RPSSSHDTTVTTTNA). Catalysis depends on residues histidine 67 and asparagine 140. Residue tyrosine 351 coordinates heme. Positions 402 to 422 (PLRQAAPPTPLPPRPVAGRRE) are disordered.

It belongs to the catalase family. As to quaternary structure, homotetramer. Heme serves as cofactor. As to expression, leaf mesophyll cells, pericarp, seedling roots and the coleoptile.

The protein localises to the mitochondrion. The catalysed reaction is 2 H2O2 = O2 + 2 H2O. Occurs in almost all aerobically respiring organisms and serves to protect cells from the toxic effects of hydrogen peroxide. Its levels are highest in the light period and are lowest in the dark period, hence it may be important for scavenging hydrogen peroxide at night, rather than during the day. The protein is Catalase isozyme 3 (CAT3) of Zea mays (Maize).